Here is a 607-residue protein sequence, read N- to C-terminus: Discoidin-inducing complex subunit B (607 aa).

The N-terminal stretch at 1–19 is a signal peptide; sequence MNKKIIILIYLIFIKSIVG. Residues 20-554 are Extracellular-facing; the sequence is QNPVWIGGSG…LGTDGISKGS (535 aa). Asparagine 75, asparagine 161, asparagine 215, asparagine 276, asparagine 277, asparagine 307, asparagine 324, asparagine 453, asparagine 477, and asparagine 527 each carry an N-linked (GlcNAc...) asparagine glycan. Residues 555–575 traverse the membrane as a helical segment; that stretch reads LAGISVSMVALACFVSLGVWW. Topologically, residues 576–607 are cytoplasmic; it reads KTSKKNDQRNDSQVLTNFSQNKSDDIDVERKL.

As to quaternary structure, forms a complex with psiF/dicA.

It localises to the membrane. It is found in the secreted. Its function is as follows. Component of a complex that acts as a quorum sensing protein regulating discoidin gene expression during growth and development. Its function in the complex is unclear as it has no ability to induce discoidin during growth and development by itself. The chain is Discoidin-inducing complex subunit B (dicB) from Dictyostelium discoideum (Social amoeba).